The following is a 273-amino-acid chain: ATP synthase subunit a (273 aa).

Helical transmembrane passes span tryptophan 44 to tyrosine 64, isoleucine 104 to isoleucine 124, aspartate 149 to isoleucine 169, leucine 223 to tryptophan 243, and alanine 244 to valine 264.

The protein belongs to the ATPase A chain family. In terms of assembly, F-type ATPases have 2 components, CF(1) - the catalytic core - and CF(0) - the membrane proton channel. CF(1) has five subunits: alpha(3), beta(3), gamma(1), delta(1), epsilon(1). CF(0) has three main subunits: a(1), b(2) and c(9-12). The alpha and beta chains form an alternating ring which encloses part of the gamma chain. CF(1) is attached to CF(0) by a central stalk formed by the gamma and epsilon chains, while a peripheral stalk is formed by the delta and b chains.

Its subcellular location is the cell inner membrane. Its function is as follows. Key component of the proton channel; it plays a direct role in the translocation of protons across the membrane. This chain is ATP synthase subunit a, found in Shewanella putrefaciens (strain CN-32 / ATCC BAA-453).